Here is a 407-residue protein sequence, read N- to C-terminus: MDNVAEMPEEKYVEVDDFLRLAVKFYNTLGIDPYETGRKRTIWFQIYFALNMFNMVFSFYAEVATLVDRLRDNENFLESCILLSYVSFVVMGLSKIGAVMKKKPKMTALVRQLETCFPSPSAKVQEEYAVKSWLKRCHIYTKGFGGLFMIMYFAHALIPLFIYFIQRVLLHYPDAKQIMPFYQLEPWEFRDSWLFYPSYFHQSSAGYTATCGSIAGDLMIFAVVLQVIMHYERLAKVLREFKIQAHNAPNGAKEDIRKLQSLVANHIDILRLTDLMNEVFGIPLLLNFIASALLVCLVGVQLTIALSPEYFCKQMLFLISVLLEVYLLCSFSQRLIDASENVGHAAYDMDWLGSDKRFKKILIFISMRSQKPVCLKATVVLDLSMPTMSIFLGMSYKFFCAVRTMYQ.

The Cytoplasmic portion of the chain corresponds to 1–40 (MDNVAEMPEEKYVEVDDFLRLAVKFYNTLGIDPYETGRKR). The chain crosses the membrane as a helical span at residues 41 to 61 (TIWFQIYFALNMFNMVFSFYA). The Extracellular portion of the chain corresponds to 62–79 (EVATLVDRLRDNENFLES). The chain crosses the membrane as a helical span at residues 80 to 100 (CILLSYVSFVVMGLSKIGAVM). At 101–144 (KKKPKMTALVRQLETCFPSPSAKVQEEYAVKSWLKRCHIYTKGF) the chain is on the cytoplasmic side. The helical transmembrane segment at 145–165 (GGLFMIMYFAHALIPLFIYFI) threads the bilayer. Over 166–208 (QRVLLHYPDAKQIMPFYQLEPWEFRDSWLFYPSYFHQSSAGYT) the chain is Extracellular. A helical transmembrane segment spans residues 209–229 (ATCGSIAGDLMIFAVVLQVIM). Residues 230–278 (HYERLAKVLREFKIQAHNAPNGAKEDIRKLQSLVANHIDILRLTDLMNE) are Cytoplasmic-facing. Residues 279–300 (VFGIPLLLNFIASALLVCLVGV) form a helical membrane-spanning segment. At 301–314 (QLTIALSPEYFCKQ) the chain is on the extracellular side. A helical membrane pass occupies residues 315–331 (MLFLISVLLEVYLLCSF). At 332 to 378 (SQRLIDASENVGHAAYDMDWLGSDKRFKKILIFISMRSQKPVCLKAT) the chain is on the cytoplasmic side. Residues 379–401 (VVLDLSMPTMSIFLGMSYKFFCA) traverse the membrane as a helical segment. The Extracellular portion of the chain corresponds to 402–407 (VRTMYQ).

It belongs to the insect chemoreceptor superfamily. Heteromeric odorant receptor channel (TC 1.A.69) family. Or49a subfamily. In terms of assembly, interacts with Orco. Complexes exist early in the endomembrane system in olfactory sensory neurons (OSNs), coupling these complexes to the conserved ciliary trafficking pathway. Expressed in olfactory sensory neurons in the antenna.

It localises to the cell membrane. In terms of biological role, odorant receptor which mediates acceptance or avoidance behavior, depending on its substrates. The odorant receptor repertoire encodes a large collection of odor stimuli that vary widely in identity, intensity, and duration. Forms a complex with Orco to form odorant-sensing units, providing sensitive and prolonged odorant signaling and calcium permeability. Involved in the behavioral responses to benzaldehyde and acetophenone. In Drosophila melanogaster (Fruit fly), this protein is Odorant receptor 67a (Or67a).